A 757-amino-acid chain; its full sequence is Dynamin-related protein DNM1 (757 aa).

A Dynamin-type G domain is found at 25-333; it reads TLDLPILAVV…LLSHIRDKLP (309 aa). The segment at 35-42 is G1 motif; it reads GSQSSGKS. Position 35–42 (35–42) interacts with GTP; sequence GSQSSGKS. The interval 61–63 is G2 motif; that stretch reads VTR. The interval 175 to 178 is G3 motif; that stretch reads DLPG. Residues 175 to 179 and 244 to 247 contribute to the GTP site; these read DLPGI and TKLD. A G4 motif region spans residues 244–247; it reads TKLD. Positions 274–277 are G5 motif; the sequence is VNRS. Residues 557-597 are disordered; that stretch reads SKLSQQENGQTNGINGTSSISSNIDQDSAKNSDYDDDGIDA. A compositionally biased stretch (low complexity) spans 567–580; that stretch reads TNGINGTSSISSNI. A Phosphoserine modification is found at Ser629. The GED domain maps to 670–757; that stretch reads CELIKRLIVS…KAATLISNIL (88 aa).

This sequence belongs to the TRAFAC class dynamin-like GTPase superfamily. Dynamin/Fzo/YdjA family. As to quaternary structure, interacts with FIS1 and MDV1.

It is found in the mitochondrion outer membrane. The catalysed reaction is GTP + H2O = GDP + phosphate + H(+). Functionally, microtubule-associated force-producing protein that participates mitochondrial fission. Fission of mitochondria occurs in many cell types and constitutes an important step in mitochondria morphology, which is balanced between fusion and fission. Functions antagonistically with FZO1. The chain is Dynamin-related protein DNM1 (DNM1) from Saccharomyces cerevisiae (strain ATCC 204508 / S288c) (Baker's yeast).